The following is a 373-amino-acid chain: 5-amino-6-(5-phospho-D-ribitylamino)uracil phosphatase, chloroplastic (373 aa).

Belongs to the HAD-like hydrolase superfamily. DOG/GPP family. Homodimer. It depends on Mg(2+) as a cofactor.

It localises to the plastid. Its subcellular location is the chloroplast. It carries out the reaction 5-amino-6-(5-phospho-D-ribitylamino)uracil + H2O = 5-amino-6-(D-ribitylamino)uracil + phosphate. Its function is as follows. Catalyzes the dephosphorylation of 5-amino-6-(5-phospho-D-ribitylamino)uracil, also known as ARPP, but has no activity toward flavin mononucleotide (FMN). The chain is 5-amino-6-(5-phospho-D-ribitylamino)uracil phosphatase, chloroplastic from Arabidopsis thaliana (Mouse-ear cress).